Here is a 73-residue protein sequence, read N- to C-terminus: UPF0154 protein MG335.1 (73 aa).

A helical transmembrane segment spans residues 6–26; sequence LALGLGIPLSLLVGMILGYFI.

The protein belongs to the UPF0154 family.

The protein resides in the membrane. This Mycoplasma genitalium (strain ATCC 33530 / DSM 19775 / NCTC 10195 / G37) (Mycoplasmoides genitalium) protein is UPF0154 protein MG335.1.